The sequence spans 355 residues: Probable dual-specificity RNA methyltransferase RlmN (355 aa).

Residue Glu-89 is the Proton acceptor of the active site. Residues 95 to 322 (YENRKTVCLS…KRLGVPTSIR (228 aa)) form the Radical SAM core domain. Cysteines 102 and 333 form a disulfide. Residues Cys-109, Cys-113, and Cys-116 each contribute to the [4Fe-4S] cluster site. S-adenosyl-L-methionine-binding positions include 159 to 160 (GE), Ser-191, 214 to 216 (SLH), and Asn-290. The active-site S-methylcysteine intermediate is the Cys-333.

It belongs to the radical SAM superfamily. RlmN family. The cofactor is [4Fe-4S] cluster.

It is found in the cytoplasm. It catalyses the reaction adenosine(2503) in 23S rRNA + 2 reduced [2Fe-2S]-[ferredoxin] + 2 S-adenosyl-L-methionine = 2-methyladenosine(2503) in 23S rRNA + 5'-deoxyadenosine + L-methionine + 2 oxidized [2Fe-2S]-[ferredoxin] + S-adenosyl-L-homocysteine. The catalysed reaction is adenosine(37) in tRNA + 2 reduced [2Fe-2S]-[ferredoxin] + 2 S-adenosyl-L-methionine = 2-methyladenosine(37) in tRNA + 5'-deoxyadenosine + L-methionine + 2 oxidized [2Fe-2S]-[ferredoxin] + S-adenosyl-L-homocysteine. Specifically methylates position 2 of adenine 2503 in 23S rRNA and position 2 of adenine 37 in tRNAs. This Thermus thermophilus (strain ATCC 27634 / DSM 579 / HB8) protein is Probable dual-specificity RNA methyltransferase RlmN.